The following is a 315-amino-acid chain: Calumenin (315 aa).

Positions 1 to 19 (MDLRQFLMCLSLCTAFALS) are cleaved as a signal peptide. S44 bears the Phosphoserine mark. Y47 carries the post-translational modification Phosphotyrosine. The residue at position 65 (T65) is a Phosphothreonine. EF-hand domains lie at 68–103 (ESKE…AQKK), 104–139 (YIYD…TYLD), 151–186 (QMMV…EEYD), 188–223 (MKDI…HDGN), 229–264 (WVKT…SDYD), and 265–300 (HAEA…FVGS). S69 bears the Phosphoserine mark. Ca(2+) is bound by residues D81, D83, D85, E92, D117, N119, D121, and E128. N131 is a glycosylation site (N-linked (GlcNAc...) asparagine). D164 is a Ca(2+) binding site. K165 carries the N6-acetyllysine modification. The Ca(2+) site is built by D166, D168, E175, D201, N203, D205, E212, D242, N244, D246, K248, and E253. T254 is subject to Phosphothreonine. Phosphoserine occurs at positions 261 and 277. The Ca(2+) site is built by D278, N280, D282, K284, and E289. A Prevents secretion from ER motif is present at residues 312 to 315 (HDEF).

It belongs to the CREC family. In terms of assembly, interacts with GGCX.

The protein localises to the endoplasmic reticulum membrane. Its subcellular location is the golgi apparatus. The protein resides in the secreted. It localises to the melanosome. It is found in the sarcoplasmic reticulum lumen. Functionally, involved in regulation of vitamin K-dependent carboxylation of multiple N-terminal glutamate residues. Seems to inhibit gamma-carboxylase GGCX. Binds 7 calcium ions with a low affinity. The chain is Calumenin (CALU) from Bos taurus (Bovine).